The primary structure comprises 190 residues: MIKIERQTKETDIVVELNVDGKGKSDIDTGIGFFDHMLESFAKHARFDVKVVCKGDIHVDFHHSVEDVGIVLGQAFYQSVFPVHNKERFGDAVIVMDESAVECAIDLSNRPFLVYEVDIDGTIGQFDAELIEEFFRAFVFNARITAHIIQKRGKNRHHLAEASFKALAVALRRALAEDKRAGMPSTKGVL.

The protein belongs to the imidazoleglycerol-phosphate dehydratase family.

It is found in the cytoplasm. The enzyme catalyses D-erythro-1-(imidazol-4-yl)glycerol 3-phosphate = 3-(imidazol-4-yl)-2-oxopropyl phosphate + H2O. The protein operates within amino-acid biosynthesis; L-histidine biosynthesis; L-histidine from 5-phospho-alpha-D-ribose 1-diphosphate: step 6/9. The chain is Imidazoleglycerol-phosphate dehydratase from Nitratiruptor sp. (strain SB155-2).